The following is a 251-amino-acid chain: Auxin-responsive protein IAA29 (251 aa).

Residues 3–7 (LDLGL) carry the EAR-like (transcriptional repression) motif. Positions 159–246 (SMYVKVKMDG…SIIRDRPCAY (88 aa)) constitute a PB1 domain.

The protein belongs to the Aux/IAA family. Homodimers and heterodimers.

It is found in the nucleus. In terms of biological role, aux/IAA proteins are short-lived transcriptional factors that function as repressors of early auxin response genes at low auxin concentrations. Repression is thought to result from the interaction with auxin response factors (ARFs), proteins that bind to the auxin-responsive promoter element (AuxRE). Formation of heterodimers with ARF proteins may alter their ability to modulate early auxin response genes expression. In Arabidopsis thaliana (Mouse-ear cress), this protein is Auxin-responsive protein IAA29 (IAA29).